The sequence spans 265 residues: 4-hydroxy-tetrahydrodipicolinate reductase (265 aa).

NAD(+) contacts are provided by residues 7–12 and D33; that span reads GASGRM. R34 lines the NADP(+) pocket. Residues 96–98 and 120–123 contribute to the NAD(+) site; these read GTT and AANM. Catalysis depends on H153, which acts as the Proton donor/acceptor. Residue H154 coordinates (S)-2,3,4,5-tetrahydrodipicolinate. Residue K157 is the Proton donor of the active site. 163–164 contributes to the (S)-2,3,4,5-tetrahydrodipicolinate binding site; sequence GT.

Belongs to the DapB family.

It localises to the cytoplasm. It carries out the reaction (S)-2,3,4,5-tetrahydrodipicolinate + NAD(+) + H2O = (2S,4S)-4-hydroxy-2,3,4,5-tetrahydrodipicolinate + NADH + H(+). It catalyses the reaction (S)-2,3,4,5-tetrahydrodipicolinate + NADP(+) + H2O = (2S,4S)-4-hydroxy-2,3,4,5-tetrahydrodipicolinate + NADPH + H(+). It participates in amino-acid biosynthesis; L-lysine biosynthesis via DAP pathway; (S)-tetrahydrodipicolinate from L-aspartate: step 4/4. In terms of biological role, catalyzes the conversion of 4-hydroxy-tetrahydrodipicolinate (HTPA) to tetrahydrodipicolinate. This is 4-hydroxy-tetrahydrodipicolinate reductase from Burkholderia vietnamiensis (strain G4 / LMG 22486) (Burkholderia cepacia (strain R1808)).